The sequence spans 293 residues: MTENNDIKMVIITGMSGAGKTVALQSFEDLGYFCVDNLPPMLLPKFIELMADSKGKMNKVALGIDLRGREFFEHLWGALDDLSERTWIIPHILFLDAKDSTLVTRYKETRRSHPLAPTGLPLKGIEAERDLLTDMKARANIVLDTSDLKPKELREKIVHLFSTETEQAFRVNVMSFGFKYGIPIDADLVFDVRFLPNPYYIPHMKPLTGLDEEVSSYVLKFNETHKFLEKLTDLITFMLPHYKREGKSQLVIAIGCTGGQHRSVTLTEYLGKHLKPEYSVHVSHRDVEKRKGH.

An ATP-binding site is contributed by 14–21; it reads GMSGAGKT. 65-68 provides a ligand contact to GTP; sequence DLRG.

The protein belongs to the RapZ-like family.

Displays ATPase and GTPase activities. This Bacillus cereus (strain G9842) protein is Nucleotide-binding protein BCG9842_B5683.